Reading from the N-terminus, the 150-residue chain is Large ribosomal subunit protein uL13 (150 aa).

It belongs to the universal ribosomal protein uL13 family. Part of the 50S ribosomal subunit.

Its function is as follows. This protein is one of the early assembly proteins of the 50S ribosomal subunit, although it is not seen to bind rRNA by itself. It is important during the early stages of 50S assembly. This chain is Large ribosomal subunit protein uL13, found in Mesoplasma florum (strain ATCC 33453 / NBRC 100688 / NCTC 11704 / L1) (Acholeplasma florum).